The following is a 355-amino-acid chain: Glycerol-1-phosphate dehydrogenase [NAD(P)+] (355 aa).

NAD(+) is bound by residues 101–105 (GKSID) and 123–126 (TAAS). A substrate-binding site is contributed by aspartate 128. Serine 132 is a binding site for NAD(+). Aspartate 175 contributes to the substrate binding site. Zn(2+) is bound by residues aspartate 175 and histidine 255. A substrate-binding site is contributed by histidine 259. Zn(2+) is bound at residue histidine 271.

This sequence belongs to the glycerol-1-phosphate dehydrogenase family. As to quaternary structure, homodimer. It depends on Zn(2+) as a cofactor.

It localises to the cytoplasm. The catalysed reaction is sn-glycerol 1-phosphate + NAD(+) = dihydroxyacetone phosphate + NADH + H(+). It carries out the reaction sn-glycerol 1-phosphate + NADP(+) = dihydroxyacetone phosphate + NADPH + H(+). The protein operates within membrane lipid metabolism; glycerophospholipid metabolism. Its function is as follows. Catalyzes the NAD(P)H-dependent reduction of dihydroxyacetonephosphate (DHAP or glycerone phosphate) to glycerol 1-phosphate (G1P). The G1P thus generated is used as the glycerophosphate backbone of phospholipids in the cellular membranes of Archaea. The sequence is that of Glycerol-1-phosphate dehydrogenase [NAD(P)+] from Staphylothermus marinus (strain ATCC 43588 / DSM 3639 / JCM 9404 / F1).